A 1079-amino-acid chain; its full sequence is Psi-producing oxygenase A (1079 aa).

The tract at residues 105–446 (TNTFLTTLWN…DGSYDDNDLV (342 aa)) is linoleate 8R-lipoxygenase. His202 contacts heme b. The active site involves Tyr374. A heme b-binding site is contributed by His377. The segment at 654–1079 (QFINSHSACM…WDGDLPEVKE (426 aa)) is 9,12-octadecadienoate 8-hydroperoxide 8R-isomerase.

The protein belongs to the peroxidase family. As to quaternary structure, homotetramer. It depends on heme b as a cofactor.

It catalyses the reaction (9Z,12Z)-octadecadienoate + O2 = (8R,9Z,12Z)-8-hydroperoxyoctadeca-9,12-dienoate. The enzyme catalyses (8R,9Z,12Z)-8-hydroperoxyoctadeca-9,12-dienoate = (5S,8R,9Z,12Z)-5,8-dihydroxyoctadeca-9,12-dienoate. Its function is as follows. Bifunctional heme-containing enzyme that oxidizes linoleic acid to (8R,9Z,12Z)-8-hydroperoxyoctadeca-9,12-dienoate (within the N-terminal heme peroxidase domain), which is subsequently isomerized to (5S,8R,9Z,12Z)-5,8-dihydroxyoctadeca-9,12-dienoate (within the C-terminal P450 heme thiolate domain). Oxidized unsaturated fatty acids, so-called oxylipins, derived from endogenous fatty acids, influence the development of the asexual conidiophores and sexual cleistothecia and regulate the secondary metabolism. These substances were collectively named psi factors and are primarily a mixture of hydroxylated oleic, linoleic and alpha-linolenic acids. They are termed psi-beta, psi-alpha, and psi-gamma, respectively. Oxylipins may also serve as activators of mammalian immune responses contributing to enhanced resistance to opportunistic fungi and as factors that modulate fungal development contributing to resistance to host defenses. In Aspergillus fumigatus (strain ATCC MYA-4609 / CBS 101355 / FGSC A1100 / Af293) (Neosartorya fumigata), this protein is Psi-producing oxygenase A (ppoA).